The following is a 103-amino-acid chain: Carboxysome shell protein CcmK2 (103 aa).

In terms of domain architecture, BMC spans 4-90 (AVGMIETRGF…PHENLEYVLP (87 aa)).

It belongs to the bacterial microcompartments protein family. CcmK subfamily. In terms of assembly, homohexamer, might also make dodecamers. Interacts with full-length CcmM. Forms mixed heterohexamers of all possible stoichiometries with CcmK1, which might form dodecamers. Only very weak interactions with CcmK3 and CcmK4 were seen.

The protein resides in the carboxysome. Functionally, one of the shell proteins of the carboxysome, a polyhedral inclusion where RuBisCO (ribulose bisphosphate carboxylase, rbcL-rbcS) is sequestered. The central pore probably regulates metabolite flux. Hexamers make sheets that form the facets of the polyhedral carboxysome. This is Carboxysome shell protein CcmK2 from Synechocystis sp. (strain ATCC 27184 / PCC 6803 / Kazusa).